The primary structure comprises 397 residues: Lysophospholipid transporter LplT (397 aa).

A run of 11 helical transmembrane segments spans residues 16-36 (MMAV…LLFA), 53-73 (VLQM…GQVA), 91-111 (LGAV…LVGV), 139-159 (LMES…GMLA), 164-184 (GAAL…NLLI), 229-249 (WGAG…ALGI), 257-277 (YLNA…AKLV), 282-302 (VSRC…FSLQ), 304-324 (AALP…FFVV), 344-364 (IAVQ…LYSL), and 372-392 (VVGI…GLWL).

Belongs to the major facilitator superfamily. LplT (TC 2.A.1.42) family.

Its subcellular location is the cell inner membrane. In terms of biological role, catalyzes the facilitated diffusion of 2-acyl-glycero-3-phosphoethanolamine (2-acyl-GPE) into the cell. This Cronobacter sakazakii (strain ATCC BAA-894) (Enterobacter sakazakii) protein is Lysophospholipid transporter LplT.